The chain runs to 268 residues: MNAFDRARQSAIAAAREARGTYRNGLVTPTAGVAPGMTQANLIALPRDWAYDFLLYAQRNPKACPILDVSDAGSPTTLLAEGSDLRTDIPMYRIWRDGKLAEEVSDATQAWAEHDDMVAFLIGCSFTFETPLQEAGIEVRHITDGCNVPMYRTNRACRPAGRLHGEMVVSMRPIPADRVAEASAISGRYPSVHGAPVHIGEPGRLGINDLSRPDFGDAVSIKPGEVPVFWACGVTPQAAVMASGVPFAITHSPGYMFITDVPDSTYHV.

The protein belongs to the D-glutamate cyclase family.

The sequence is that of Putative hydro-lyase PSPTO_5379 from Pseudomonas syringae pv. tomato (strain ATCC BAA-871 / DC3000).